The primary structure comprises 91 residues: Large ribosomal subunit protein bL31B (91 aa).

The protein belongs to the bacterial ribosomal protein bL31 family. Type B subfamily. In terms of assembly, part of the 50S ribosomal subunit.

This Neisseria gonorrhoeae (strain NCCP11945) protein is Large ribosomal subunit protein bL31B.